We begin with the raw amino-acid sequence, 116 residues long: Ribosome-binding factor A (116 aa).

It belongs to the RbfA family. In terms of assembly, monomer. Binds 30S ribosomal subunits, but not 50S ribosomal subunits or 70S ribosomes.

It localises to the cytoplasm. In terms of biological role, one of several proteins that assist in the late maturation steps of the functional core of the 30S ribosomal subunit. Associates with free 30S ribosomal subunits (but not with 30S subunits that are part of 70S ribosomes or polysomes). Required for efficient processing of 16S rRNA. May interact with the 5'-terminal helix region of 16S rRNA. The protein is Ribosome-binding factor A of Streptococcus equi subsp. zooepidemicus (strain H70).